Reading from the N-terminus, the 137-residue chain is Transcription antitermination protein NusB (137 aa).

The protein belongs to the NusB family.

In terms of biological role, involved in transcription antitermination. Required for transcription of ribosomal RNA (rRNA) genes. Binds specifically to the boxA antiterminator sequence of the ribosomal RNA (rrn) operons. This Borreliella afzelii (strain PKo) (Borrelia afzelii) protein is Transcription antitermination protein NusB.